A 249-amino-acid chain; its full sequence is Sugar fermentation stimulation protein homolog (249 aa).

It belongs to the SfsA family.

This is Sugar fermentation stimulation protein homolog from Rhizobium rhizogenes (strain K84 / ATCC BAA-868) (Agrobacterium radiobacter).